The following is a 66-amino-acid chain: Large ribosomal subunit protein bL35 (66 aa).

Composition is skewed to basic residues over residues 1–16 (MPKQKTHRGLAKRVKR) and 23–45 (KRGRAFTSHRFHGKTKKQRRQLR). A disordered region spans residues 1–53 (MPKQKTHRGLAKRVKRTGGGGLKRGRAFTSHRFHGKTKKQRRQLRKASMVAKG).

This sequence belongs to the bacterial ribosomal protein bL35 family.

The polypeptide is Large ribosomal subunit protein bL35 (Enterococcus faecalis (strain ATCC 700802 / V583)).